Here is a 351-residue protein sequence, read N- to C-terminus: Snurportin-1 (351 aa).

Disordered regions lie at residues 1–66 (MESS…QKGI) and 294–322 (EQKK…EYDS). Residues 8 to 42 (LYKKGLDIGEQQKQRQKELLKQQKLRRQQEQDDYR) show a composition bias toward basic and acidic residues. Basic residues predominate over residues 52–62 (PRKKSGKRSGH). Residues 274–330 (VLQYMDAFEQKLAEHRRTLKEQKKKVNEQKEDPHTMEAEEDVESDEYDSLKRVLDQQ) are a coiled coil. Basic and acidic residues predominate over residues 294 to 310 (EQKKKVNEQKEDPHTME). Positions 311 to 320 (AEEDVESDEY) are enriched in acidic residues.

The protein belongs to the snurportin family. In terms of assembly, interacts with components of the snRNP complex including SmB and Smn; these interactions are RNA-dependent. Interacts with importin-7 msk but not with importin subunit beta Fs(2)Ket; the interaction is RNA-dependent.

It localises to the nucleus. The protein resides in the cytoplasm. It is found in the U-body. The protein localises to the nucleus speckle. Its subcellular location is the cajal body. In terms of biological role, functions as an U snRNP-specific nuclear import adapter. Involved in the trimethylguanosine (m3G)-cap-dependent nuclear import of U snRNPs. Binds specifically to the terminal m3G-cap U snRNAs. This chain is Snurportin-1, found in Drosophila melanogaster (Fruit fly).